Here is a 169-residue protein sequence, read N- to C-terminus: Glycine-rich RNA-binding protein 8 (169 aa).

The region spanning 6–84 (YRCFVGGLAW…RVITVNEAQS (79 aa)) is the RRM domain. ADP-ribosylarginine; by HopU1 is present on arginine 47. Residues 80–99 (NEAQSRGSGGGGGGRGGSGG) are disordered. Gly residues predominate over residues 86 to 99 (GSGGGGGGRGGSGG). The tract at residues 86–168 (GSGGGGGGRG…GGSYGGGGGG (83 aa)) is glycine-rich (GR) required for cell-to-cell movement. A nuclear targeting sequence (M9) region spans residues 95–143 (GGSGGGYRSGGGGGYSGGGGGGYSGGGGGGYERRSGGYGSGGGGGGRGY). Residue serine 103 is modified to Phosphoserine. The disordered stretch occupies residues 130-169 (GGYGSGGGGGGRGYGGGGRREGGGYGGGDGGSYGGGGGGW).

This sequence belongs to the GR-RBP family. As to quaternary structure, interacts with TRN1. Binds to small phloem-mobile single-stranded RNAs (ss-sRNA, e.g. small interfering RNA (siRNA) and microRNA (miRNA)) in the phloeme exudate, including viral-derived sRNA (vsiRNA). ADP-ribosylated by the Pseudomonas syringae type III effector HopU1. ADP-ribosylation reduces the ability of the protein to bind RNA. As to expression, ubiquitous.

It is found in the cytoplasm. The protein localises to the nucleus. It localises to the secreted. Functionally, plays a role in RNA transcription or processing during stress. Binds RNAs and DNAs sequence with a preference to single-stranded nucleic acids. Involved in mRNA alternative splicing of numerous targets by modulating splice site selection. Negatively regulates the circadian oscillations of its own transcript as well as RBG7 transcript. Forms an interlocked post-transcriptional negative feedback loop with the RBG7 autoregulatory circuit. Both proteins negatively autoregulate and reciprocally crossregulate by binding to their pre-mRNAs and promoting unproductive splicing coupled to degradation via the NMD pathway. Target of the Pseudomonas syringae type III effector HopU1. Mediates cell-to-cell trafficking of RNA interference (RNAi) signals (small RNAs (sRNA), e.g. small interfering RNA (siRNA) and microRNA (miRNA)) which regulate growth and development, as well as responses to environmental inputs, including pathogen attack; can compromise zucchini yellow mosaic virus (ZYMV) and tobacco rattle virus (TRV) infections at the early stage. This Arabidopsis thaliana (Mouse-ear cress) protein is Glycine-rich RNA-binding protein 8.